Reading from the N-terminus, the 395-residue chain is Phosphopentomutase (395 aa).

Positions 14, 286, 291, 327, 328, and 339 each coordinate Mn(2+).

It belongs to the phosphopentomutase family. Mn(2+) is required as a cofactor.

It localises to the cytoplasm. The enzyme catalyses 2-deoxy-alpha-D-ribose 1-phosphate = 2-deoxy-D-ribose 5-phosphate. It catalyses the reaction alpha-D-ribose 1-phosphate = D-ribose 5-phosphate. It participates in carbohydrate degradation; 2-deoxy-D-ribose 1-phosphate degradation; D-glyceraldehyde 3-phosphate and acetaldehyde from 2-deoxy-alpha-D-ribose 1-phosphate: step 1/2. Isomerase that catalyzes the conversion of deoxy-ribose 1-phosphate (dRib-1-P) and ribose 1-phosphate (Rib-1-P) to deoxy-ribose 5-phosphate (dRib-5-P) and ribose 5-phosphate (Rib-5-P), respectively. The protein is Phosphopentomutase of Staphylococcus saprophyticus subsp. saprophyticus (strain ATCC 15305 / DSM 20229 / NCIMB 8711 / NCTC 7292 / S-41).